Reading from the N-terminus, the 487-residue chain is WAS/WASL-interacting protein family member 1 (487 aa).

The segment covering 1–14 (MPVPPPPAPPPPPT) has biased composition (pro residues). The interval 1-487 (MPVPPPPAPP…GAPPLPPIPR (487 aa)) is disordered. A compositionally biased stretch (polar residues) spans 21-31 (EKPSLNKTEQA). One can recognise a WH2 domain in the interval 32–49 (GRNALLSDISKGKKLKKT). Residue arginine 33 is modified to Asymmetric dimethylarginine. The segment at 45–48 (KLKK) is binds actin. Positions 64–100 (GAGGGYGGGSGGGGGGGSSGGGGNFGGGGPPGLGGLF) are enriched in gly residues. 2 positions are modified to omega-N-methylarginine: arginine 121 and arginine 130. Positions 136–147 (PFSSPSGPGRFP) are enriched in low complexity. Residue serine 138 is modified to Phosphoserine. Composition is skewed to pro residues over residues 157-170 (PPEP…PPRP) and 178-190 (SLPP…PRPI). Serine 222 carries the post-translational modification Phosphoserine. Composition is skewed to pro residues over residues 234–243 (FPRPPLPPTP), 269–285 (VPPP…PSTP), and 293–309 (APPP…PLPP). Serine 324 is subject to Phosphoserine. Residues 328–355 (PTPPLPSPGRSGPLPPPPTERPPPPVRD) are compositionally biased toward pro residues. Threonine 329 is subject to Phosphothreonine. Residue serine 334 is modified to Phosphoserine. XRSGPXPPXP motif repeat units lie at residues 336–345 (GRSGPLPPPP), 358–367 (GRSGPLPPPP), and 394–403 (PRSGPRPPLP). A compositionally biased stretch (pro residues) spans 397–418 (GPRPPLPPDRPGAGAPPPPPPS). Over residues 419 to 428 (TSVRNGFQDS) the composition is skewed to polar residues. The segment covering 464–478 (ARSESRSGSNRRERG) has biased composition (basic and acidic residues).

This sequence belongs to the verprolin family. As to quaternary structure, binds to WAS within the N-terminal region, at a site distinct from the CDC42-binding site. Binds profilin and actin. Interacts with DBNL. Binds to WASL. Interacts with DBNL. Interacts with FNBP1L (via the SH3 domain). In terms of tissue distribution, isoforms were differentially expressed. One isoform was ubiquitously expressed, another was muscle-specific and another was expressed in the liver, heart and testis.

It is found in the cytoplasmic vesicle. Its subcellular location is the cytoplasm. The protein resides in the cytoskeleton. The protein localises to the cell projection. It localises to the ruffle. Its function is as follows. Plays a role in the reorganization of the actin cytoskeleton. Contributes with NCK1 and GRB2 in the recruitment and activation of WASL. Plays a role in the formation of cell ruffles. May participate in regulating the subcellular localization of WASL, resulting in the disassembly of stress fibers in favor of filopodia formation. The protein is WAS/WASL-interacting protein family member 1 (Wipf1) of Rattus norvegicus (Rat).